Reading from the N-terminus, the 421-residue chain is Gamma-glutamyl phosphate reductase (421 aa).

It belongs to the gamma-glutamyl phosphate reductase family.

The protein resides in the cytoplasm. It catalyses the reaction L-glutamate 5-semialdehyde + phosphate + NADP(+) = L-glutamyl 5-phosphate + NADPH + H(+). It participates in amino-acid biosynthesis; L-proline biosynthesis; L-glutamate 5-semialdehyde from L-glutamate: step 2/2. Functionally, catalyzes the NADPH-dependent reduction of L-glutamate 5-phosphate into L-glutamate 5-semialdehyde and phosphate. The product spontaneously undergoes cyclization to form 1-pyrroline-5-carboxylate. The protein is Gamma-glutamyl phosphate reductase of Bordetella petrii (strain ATCC BAA-461 / DSM 12804 / CCUG 43448).